Reading from the N-terminus, the 214-residue chain is uncharacterized protein (214 aa).

The first 24 residues, 1-24 (MKIWIKAICITSFVIQMSACSSSA), serve as a signal peptide directing secretion. Residues 64-197 (ETVKGKVLHI…KEAKAGVWSI (134 aa)) enclose the TNase-like domain. Catalysis depends on residues Arg91, Glu99, and Arg142.

This is an uncharacterized protein from Bacillus anthracis.